The primary structure comprises 337 residues: 4-hydroxyproline 2-epimerase (337 aa).

Cys91 functions as the Proton acceptor in the catalytic mechanism. Residues 92–93 (GH), Asp252, and 257–258 (GT) contribute to the substrate site.

Belongs to the proline racemase family.

It carries out the reaction trans-4-hydroxy-L-proline = cis-4-hydroxy-D-proline. Catalyzes the epimerization of trans-4-hydroxy-L-proline (t4LHyp) to cis-4-hydroxy-D-proline (c4DHyp). Is involved in a degradation pathway that converts t4LHyp to alpha-ketoglutarate, which allows R.sphaeroides to grow on t4LHyp as a sole carbon source. Displays no proline racemase activity. The protein is 4-hydroxyproline 2-epimerase of Cereibacter sphaeroides (strain ATCC 17023 / DSM 158 / JCM 6121 / CCUG 31486 / LMG 2827 / NBRC 12203 / NCIMB 8253 / ATH 2.4.1.) (Rhodobacter sphaeroides).